The following is a 408-amino-acid chain: Adenylosuccinate synthetase (408 aa).

GTP contacts are provided by residues 12–18 and 40–42; these read GDEGKGK and GHT. The active-site Proton acceptor is the Asp13. Positions 13 and 40 each coordinate Mg(2+). IMP contacts are provided by residues 13 to 16, 38 to 41, Thr121, Arg135, Gln213, Thr228, and Arg292; these read DEGK and NAGH. His41 serves as the catalytic Proton donor. 288-294 contributes to the substrate binding site; that stretch reads TTTGRPR. GTP contacts are provided by residues Arg294, 320–322, and 393–395; these read KLD and STS.

The protein belongs to the adenylosuccinate synthetase family. Homodimer. Mg(2+) is required as a cofactor.

Its subcellular location is the cytoplasm. The enzyme catalyses IMP + L-aspartate + GTP = N(6)-(1,2-dicarboxyethyl)-AMP + GDP + phosphate + 2 H(+). Its pathway is purine metabolism; AMP biosynthesis via de novo pathway; AMP from IMP: step 1/2. Functionally, plays an important role in the de novo pathway of purine nucleotide biosynthesis. Catalyzes the first committed step in the biosynthesis of AMP from IMP. In Thermus thermophilus (strain ATCC BAA-163 / DSM 7039 / HB27), this protein is Adenylosuccinate synthetase.